The sequence spans 162 residues: MTISYEAVRDFLYREARYLDDKQWESWLEMYAPDATFWMPAWDDRDQLTEDPQSQISLIWYGNRSGLEDRVFRIKTERSSATIPDTRTSHNISNLELLEQSDGVCKLRYNWHTMNYRYKTVDHFFGTNFCTLDTCGETPLITAKKVVLKNDYIRQVIDVYHV.

The protein belongs to the bacterial ring-hydroxylating dioxygenase beta subunit family. In terms of assembly, this dioxygenase system consists of three proteins: the two subunits of the hydroxylase component (XylX and XylY), and an electron transfer component (XylZ).

It functions in the pathway xenobiotic degradation; toluene degradation. The protein is Toluate 1,2-dioxygenase subunit beta (xylY) of Pseudomonas putida (Arthrobacter siderocapsulatus).